The following is a 237-amino-acid chain: UPF0053 inner membrane protein YgdQ (237 aa).

Residues M1–T17 lie on the Periplasmic side of the membrane. Residues L18 to A38 traverse the membrane as a helical segment. Residues K39–R50 lie on the Cytoplasmic side of the membrane. A helical transmembrane segment spans residues L51 to T71. Topologically, residues R72 to T79 are periplasmic. Residues I80 to I100 form a helical membrane-spanning segment. Residues W101–S124 lie on the Cytoplasmic side of the membrane. Residues F125–I145 form a helical membrane-spanning segment. At T146–S151 the chain is on the periplasmic side. Residues D152 to A172 traverse the membrane as a helical segment. At R173–K186 the chain is on the cytoplasmic side. The chain crosses the membrane as a helical span at residues M187 to I207. The Periplasmic segment spans residues H208–V209. A helical transmembrane segment spans residues P210–I230. The Cytoplasmic portion of the chain corresponds to R231–L237.

This sequence belongs to the UPF0053 family.

The protein localises to the cell inner membrane. The chain is UPF0053 inner membrane protein YgdQ (ygdQ) from Escherichia coli O157:H7.